We begin with the raw amino-acid sequence, 327 residues long: Gonadotropin-releasing hormone receptor (327 aa).

Topologically, residues 1–37 (MASASPEQNQNHCSAVNNSNMLMQGNLPTLTLSGKIR) are extracellular. N-linked (GlcNAc...) asparagine glycosylation occurs at asparagine 17. A helical transmembrane segment spans residues 38–57 (VTVTFFLFLLSTIFNASFLL). Topologically, residues 58-76 (KLQKWTQKKEKGKKLSRMK) are cytoplasmic. The helical transmembrane segment at 77-96 (VLLKHLTLANLLETLIVMPL) threads the bilayer. The Extracellular portion of the chain corresponds to 97 to 114 (DGMWNITVQWYAGEFLCK). Asparagine 101 carries N-linked (GlcNAc...) asparagine glycosylation. A disulfide bridge connects residues cysteine 113 and cysteine 195. A helical membrane pass occupies residues 115–136 (VLSYLKLFSMYAPAFMMVVISL). Topologically, residues 137–163 (DRSLAITRPLAMKNNGKLGQSMIGLAW) are cytoplasmic. The chain crosses the membrane as a helical span at residues 164-183 (LLSGIFAGPQLYIFRMIHLA). At 184–211 (DSSGQTEGFPQCVTHCSFPQWWHQAFYN) the chain is on the extracellular side. A helical membrane pass occupies residues 212–231 (FFTFSCLFIIPLFITLICNA). Topologically, residues 232 to 280 (KIIFTLTRVLHQDPHELQLNQSKNNIPRARLRTLKMTVAFATSFTVCWT) are cytoplasmic. The helical transmembrane segment at 281–299 (PYYVLGIWYWFDPEMLNRV) threads the bilayer. The Extracellular portion of the chain corresponds to 300–305 (SDPVNH). Residues 306–325 (FFFLFALLNPCFDPLIYGYF) form a helical membrane-spanning segment. Topologically, residues 326–327 (SL) are cytoplasmic.

The protein belongs to the G-protein coupled receptor 1 family.

Its subcellular location is the cell membrane. Functionally, receptor for gonadotropin releasing hormone (GnRH) that mediates the action of GnRH to stimulate the secretion of the gonadotropic hormones luteinizing hormone (LH) and follicle-stimulating hormone (FSH). This receptor mediates its action by association with G-proteins that activate a phosphatidylinositol-calcium second messenger system. The polypeptide is Gonadotropin-releasing hormone receptor (GNRHR) (Canis lupus familiaris (Dog)).